A 101-amino-acid chain; its full sequence is Urease subunit beta (101 aa).

Belongs to the urease beta subunit family. Heterotrimer of UreA (gamma), UreB (beta) and UreC (alpha) subunits. Three heterotrimers associate to form the active enzyme.

The protein localises to the cytoplasm. It catalyses the reaction urea + 2 H2O + H(+) = hydrogencarbonate + 2 NH4(+). Its pathway is nitrogen metabolism; urea degradation; CO(2) and NH(3) from urea (urease route): step 1/1. The sequence is that of Urease subunit beta from Thermosynechococcus vestitus (strain NIES-2133 / IAM M-273 / BP-1).